The primary structure comprises 763 residues: MTDFSLYLVTDPVLGGGPEKVAGIVDSAISGGVSVVQLRDKNSGVEDVRAAAKELKELCDARGVALVVNDYLDIAVELGLHLHIGQGDTPYTQARELLPAHLELGLSIENLDQLHAVIAQCAETGVALPDVIGIGPVASTATKPDAAPALGVEGIAEIAAVAQDHGIASVAIGGVGLRNAAELAATPIDGLCVVSEIMTAANPAAAATRLRTAFQPTFSPETQTELSQTELQGAFVNSPSAPRVLSIAGTDPTGGAGIQADLKSIAAGGGYGMCVVTSLVAQNTHGVNTIHTPPLTFLEEQLEAVFSDVTVDAIKLGMLGSADTVDLVASWLGSHEHGPVVLDPVMIATSGDRLLDASAEESLRRLAVHVDVVTPNIPELAVLCDSAPAITMDEAIAQAQGFARTHDTIVIVKGGHLTGALADNAVVRPDGSVFQVENLRVNTTNSHGTGCSLSASLATKIAAGESVEKALEWSTRWLNEALRHADHLAVGTGNGPVDHGHLARRMTHAAETTPWAHLRAPRLDGATAASFTTPSTVKSPAPRIEPAGPFTRALWEASGDIIAGINSSDFITMLGDGTLRRPEFDFYIDQDAQYLAQYSRALARLSSIAPDSHAQIEWAQSAAECLVVEAELHRSYMAGKEVSAPSHITMAYTDFLIARTYTEDYVCGVAAVLPCYWLYAEIGLMLAEQNHDEHPYKDWLNTYSGEEFIAGTRAAIARLEKALENAGAEQRVDAARAFLSASVHEREFFDQATRHGWTMVGSS.

The segment at 1–210 (MTDFSLYLVT…ANPAAAATRL (210 aa)) is thiamine-phosphate synthase. Residues 37–41 (QLRDK) and Asn69 each bind 4-amino-2-methyl-5-(diphosphooxymethyl)pyrimidine. Positions 70 and 88 each coordinate Mg(2+). 4-amino-2-methyl-5-(diphosphooxymethyl)pyrimidine is bound at residue Ser107. Residue 140-142 (TAT) participates in 2-[(2R,5Z)-2-carboxy-4-methylthiazol-5(2H)-ylidene]ethyl phosphate binding. 4-amino-2-methyl-5-(diphosphooxymethyl)pyrimidine is bound at residue Lys143. 2-[(2R,5Z)-2-carboxy-4-methylthiazol-5(2H)-ylidene]ethyl phosphate is bound by residues Gly174 and 194–195 (VS). A hydroxymethylpyrimidine/phosphomethylpyrimidine kinase region spans residues 245-500 (LSIAGTDPTG…GTGNGPVDHG (256 aa)). 4-amino-5-hydroxymethyl-2-methylpyrimidine is bound at residue Gln282. The tract at residues 550 to 763 (FTRALWEASG…RHGWTMVGSS (214 aa)) is thiaminase-2.

It in the N-terminal section; belongs to the thiamine-phosphate synthase family. In the central section; belongs to the ThiD family. This sequence in the C-terminal section; belongs to the thiaminase-2 family. It depends on Mg(2+) as a cofactor.

It catalyses the reaction 2-[(2R,5Z)-2-carboxy-4-methylthiazol-5(2H)-ylidene]ethyl phosphate + 4-amino-2-methyl-5-(diphosphooxymethyl)pyrimidine + 2 H(+) = thiamine phosphate + CO2 + diphosphate. The enzyme catalyses 2-(2-carboxy-4-methylthiazol-5-yl)ethyl phosphate + 4-amino-2-methyl-5-(diphosphooxymethyl)pyrimidine + 2 H(+) = thiamine phosphate + CO2 + diphosphate. It carries out the reaction 4-methyl-5-(2-phosphooxyethyl)-thiazole + 4-amino-2-methyl-5-(diphosphooxymethyl)pyrimidine + H(+) = thiamine phosphate + diphosphate. The catalysed reaction is 4-amino-5-hydroxymethyl-2-methylpyrimidine + ATP = 4-amino-2-methyl-5-(phosphooxymethyl)pyrimidine + ADP + H(+). It catalyses the reaction 4-amino-2-methyl-5-(phosphooxymethyl)pyrimidine + ATP = 4-amino-2-methyl-5-(diphosphooxymethyl)pyrimidine + ADP. Its pathway is cofactor biosynthesis; thiamine diphosphate biosynthesis; 4-amino-2-methyl-5-diphosphomethylpyrimidine from 5-amino-1-(5-phospho-D-ribosyl)imidazole: step 3/3. It participates in cofactor biosynthesis; thiamine diphosphate biosynthesis; thiamine phosphate from 4-amino-2-methyl-5-diphosphomethylpyrimidine and 4-methyl-5-(2-phosphoethyl)-thiazole: step 1/1. Functionally, condenses 4-methyl-5-(beta-hydroxyethyl)thiazole monophosphate (THZ-P) and 2-methyl-4-amino-5-hydroxymethyl pyrimidine pyrophosphate (HMP-PP) to form thiamine monophosphate (TMP). Catalyzes the phosphorylation of hydroxymethylpyrimidine phosphate (HMP-P) to HMP-PP, and of HMP to HMP-P. This chain is Thiamine biosynthesis multifunctional protein ThiED (theD), found in Corynebacterium glutamicum (strain ATCC 13032 / DSM 20300 / JCM 1318 / BCRC 11384 / CCUG 27702 / LMG 3730 / NBRC 12168 / NCIMB 10025 / NRRL B-2784 / 534).